The chain runs to 728 residues: Phosphoribosylformylglycinamidine synthase subunit PurL (728 aa).

The active site involves His42. ATP contacts are provided by Tyr45 and Lys84. Glu86 provides a ligand contact to Mg(2+). Residues Ser87–His90 and Arg109 contribute to the substrate site. His88 acts as the Proton acceptor in catalysis. Asp110 lines the Mg(2+) pocket. Substrate is bound at residue Gln237. Asp265 serves as a coordination point for Mg(2+). Glu309–Gln311 contributes to the substrate binding site. Residues Asp491 and Gly528 each contribute to the ATP site. Asn529 contacts Mg(2+). Substrate is bound at residue Ser531.

It belongs to the FGAMS family. In terms of assembly, monomer. Part of the FGAM synthase complex composed of 1 PurL, 1 PurQ and 2 PurS subunits.

Its subcellular location is the cytoplasm. The enzyme catalyses N(2)-formyl-N(1)-(5-phospho-beta-D-ribosyl)glycinamide + L-glutamine + ATP + H2O = 2-formamido-N(1)-(5-O-phospho-beta-D-ribosyl)acetamidine + L-glutamate + ADP + phosphate + H(+). Its pathway is purine metabolism; IMP biosynthesis via de novo pathway; 5-amino-1-(5-phospho-D-ribosyl)imidazole from N(2)-formyl-N(1)-(5-phospho-D-ribosyl)glycinamide: step 1/2. Functionally, part of the phosphoribosylformylglycinamidine synthase complex involved in the purines biosynthetic pathway. Catalyzes the ATP-dependent conversion of formylglycinamide ribonucleotide (FGAR) and glutamine to yield formylglycinamidine ribonucleotide (FGAM) and glutamate. The FGAM synthase complex is composed of three subunits. PurQ produces an ammonia molecule by converting glutamine to glutamate. PurL transfers the ammonia molecule to FGAR to form FGAM in an ATP-dependent manner. PurS interacts with PurQ and PurL and is thought to assist in the transfer of the ammonia molecule from PurQ to PurL. The polypeptide is Phosphoribosylformylglycinamidine synthase subunit PurL (Campylobacter jejuni subsp. doylei (strain ATCC BAA-1458 / RM4099 / 269.97)).